Consider the following 385-residue polypeptide: Probable peptidoglycan glycosyltransferase FtsW (385 aa).

The next 9 helical transmembrane spans lie at 18-38 (LLWT…SASL), 57-77 (IYLA…PLAL), 81-101 (LRFV…IPGL), 111-131 (WIAL…CFVL), 157-177 (LLGV…VVVL), 195-215 (FLLI…AEPY), 280-300 (LGLL…WRVF), 311-331 (LLYH…QAFI), and 347-367 (LPFI…VGLI).

It belongs to the SEDS family. FtsW subfamily.

The protein localises to the cell inner membrane. It catalyses the reaction [GlcNAc-(1-&gt;4)-Mur2Ac(oyl-L-Ala-gamma-D-Glu-L-Lys-D-Ala-D-Ala)](n)-di-trans,octa-cis-undecaprenyl diphosphate + beta-D-GlcNAc-(1-&gt;4)-Mur2Ac(oyl-L-Ala-gamma-D-Glu-L-Lys-D-Ala-D-Ala)-di-trans,octa-cis-undecaprenyl diphosphate = [GlcNAc-(1-&gt;4)-Mur2Ac(oyl-L-Ala-gamma-D-Glu-L-Lys-D-Ala-D-Ala)](n+1)-di-trans,octa-cis-undecaprenyl diphosphate + di-trans,octa-cis-undecaprenyl diphosphate + H(+). It participates in cell wall biogenesis; peptidoglycan biosynthesis. Its function is as follows. Peptidoglycan polymerase that is essential for cell division. This is Probable peptidoglycan glycosyltransferase FtsW from Alcanivorax borkumensis (strain ATCC 700651 / DSM 11573 / NCIMB 13689 / SK2).